Consider the following 425-residue polypeptide: UBX domain-containing protein 4 (425 aa).

Residues 224 to 257 (TPIPSLPSTPSSYQNLPSQSLTGESLPTVSNQEK) are disordered. Residues 236-254 (YQNLPSQSLTGESLPTVSN) are compositionally biased toward polar residues. Ser338 is modified (phosphoserine). Positions 341-390 (PLPSSAIVKFDFGNGKSIVHEFSKDDNIETLRAFVASHLSPEESTSFQLT) constitute a UBX domain.

It is found in the cytoplasm. Its subcellular location is the nucleus. Its function is as follows. Involved in CDC48-dependent protein degradation through the ubiquitin/proteasome pathway. In Schizosaccharomyces pombe (strain 972 / ATCC 24843) (Fission yeast), this protein is UBX domain-containing protein 4 (ubx4).